The primary structure comprises 705 residues: Elongation factor G (705 aa).

One can recognise a tr-type G domain in the interval 8–290 (AYYRNIGISA…AVIEYLPAPT (283 aa)). Residues 17–24 (AHIDAGKT), 88–92 (DTPGH), and 142–145 (NKMD) contribute to the GTP site.

Belongs to the TRAFAC class translation factor GTPase superfamily. Classic translation factor GTPase family. EF-G/EF-2 subfamily.

The protein localises to the cytoplasm. Its function is as follows. Catalyzes the GTP-dependent ribosomal translocation step during translation elongation. During this step, the ribosome changes from the pre-translocational (PRE) to the post-translocational (POST) state as the newly formed A-site-bound peptidyl-tRNA and P-site-bound deacylated tRNA move to the P and E sites, respectively. Catalyzes the coordinated movement of the two tRNA molecules, the mRNA and conformational changes in the ribosome. The sequence is that of Elongation factor G from Baumannia cicadellinicola subsp. Homalodisca coagulata.